A 733-amino-acid chain; its full sequence is uncharacterized protein (733 aa).

The chain crosses the membrane as a helical span at residues 174-194 (WAVMILASLRPELFGPIIIAG).

The protein resides in the membrane. This is an uncharacterized protein from Rhizobium meliloti (Ensifer meliloti).